We begin with the raw amino-acid sequence, 158 residues long: NAD(P)H-quinone oxidoreductase subunit O, chloroplastic (158 aa).

Residues 1–38 (MAFSATVSQLSSLSTISSSLPISSRRLPHRSLPQFTVK) constitute a chloroplast transit peptide. Residues 33–70 (PQFTVKAEAEKEKQSTQGKSDGEASPAATKTPKTLPKK) are disordered. Residues 56-70 (ASPAATKTPKTLPKK) are compositionally biased toward low complexity.

The protein belongs to the NDH complex subunit O family. As to quaternary structure, part of the chloroplast NDH complex, composed of a mixture of chloroplast and nucleus encoded subunits. Component of the NDH subcomplex A, at least composed of ndhH, ndhI, ndhJ, ndhK, ndhL, ndhM, ndhN and ndhO.

It localises to the plastid. Its subcellular location is the chloroplast thylakoid membrane. The enzyme catalyses a plastoquinone + NADH + (n+1) H(+)(in) = a plastoquinol + NAD(+) + n H(+)(out). It catalyses the reaction a plastoquinone + NADPH + (n+1) H(+)(in) = a plastoquinol + NADP(+) + n H(+)(out). Functionally, NDH shuttles electrons from NAD(P)H:plastoquinone, via FMN and iron-sulfur (Fe-S) centers, to quinones in the photosynthetic chain and possibly in a chloroplast respiratory chain. The immediate electron acceptor for the enzyme in this species is believed to be plastoquinone. Couples the redox reaction to proton translocation, and thus conserves the redox energy in a proton gradient. This is NAD(P)H-quinone oxidoreductase subunit O, chloroplastic from Arabidopsis thaliana (Mouse-ear cress).